The chain runs to 718 residues: MFQMAKRVLLSTTLTFSLLAGSALPFLPASAIYADADTAVTNKQNFSTDVIYQVFTDRFLDGNPSNNPTGAAFDGTCSNLKLYCGGDWQGLVNKINDNYFSDLGVTALWISQPVENIFATINYSGVTNTAYHGYWARDFKKTNPYFGTMTDFQNLVTTAHAKGIKIIIDFAPNHTSPAMETDTSFAENGKLYDNGNLVGGYTNDTNGYFHHNGGSDFSTLENGIYKNLYDLADLNHNNSTIDTYFKDAIKLWLDMGVDGIRVDAVKHMPQGWQKNWMSSIYAHKPVFTFGEWFLGSAAPDADNTDFANESGMSLLDFRFNSAVRNVFRDNTSNMYALDSMLTATAADYNQVNDQVTFIDNHDMDRFKTSAVNNRRLEQALAFTLTSRGVPAIYYGTEQYLTGNGDPDNRGKMPSFSKSTTAFNVISKLAPLRKSNPAIAYGSTQQRWINNDVYIYERKFGKSVAVVAVNRNLTTPTSITNLNTSLPSGTYTDVLGGVLNGNNITSSGGNISSFTLAAGATAVWQYTASETTPTIGHVGPVMGKPGNVVTIDGRGFGSAKGTVYFGTTAVTGSAITSWEDTQIKVTIPPVAGGDYAVKVAANGVNSNAYNDFTILSGDQVSVRFVINNATTALGENIYLTGNVSELGNWTTGAASIGPAFNQVIHAYPTWYYDVSVPAGKQLEFKFFKKNGATITWEGGSNHTFTTPTSGTATVTINWQ.

Residues 1 to 34 (MFQMAKRVLLSTTLTFSLLAGSALPFLPASAIYA) form the signal peptide. The A1 stretch occupies residues 35–172 (DADTAVTNKQ…GIKIIIDFAP (138 aa)). 4 residues coordinate Ca(2+): Asp-61, Asn-63, Asn-66, and Asn-67. A disulfide bridge links Cys-77 with Cys-84. The Ca(2+) site is built by Gly-85 and Asp-87. Residue 134–135 (YW) coordinates substrate. Asn-173 provides a ligand contact to Ca(2+). The tract at residues 173–236 (NHTSPAMETD…NLYDLADLNH (64 aa)) is b. His-174 serves as a coordination point for substrate. Residue Ile-224 coordinates Ca(2+). 227–230 (NLYD) contacts substrate. A Ca(2+)-binding site is contributed by Asp-233. The segment at 237–440 (NNSTIDTYFK…LRKSNPAIAY (204 aa)) is A2. Arg-261 provides a ligand contact to substrate. The active-site Nucleophile is the Asp-263. 266–267 (KH) is a binding site for substrate. His-267 provides a ligand contact to Ca(2+). The active-site Proton donor is the Glu-291. Residues His-361, Asp-405, and Arg-409 each contribute to the substrate site. Positions 441–528 (GSTQQRWINN…ATAVWQYTAS (88 aa)) are c. Residues 529-614 (ETTPTIGHVG…SNAYNDFTIL (86 aa)) are d. The 81-residue stretch at 532-612 (PTIGHVGPVM…VNSNAYNDFT (81 aa)) folds into the IPT/TIG domain. The CBM20 domain maps to 613 to 718 (ILSGDQVSVR…GTATVTINWQ (106 aa)). An e region spans residues 615-718 (SGDQVSVRFV…GTATVTINWQ (104 aa)).

The protein belongs to the glycosyl hydrolase 13 family. In terms of assembly, monomer. Ca(2+) serves as cofactor.

Its subcellular location is the secreted. It carries out the reaction Cyclizes part of a (1-&gt;4)-alpha-D-glucan chain by formation of a (1-&gt;4)-alpha-D-glucosidic bond.. In Bacillus licheniformis, this protein is Cyclomaltodextrin glucanotransferase (cgtA).